A 359-amino-acid chain; its full sequence is Membrane-bound lytic murein transglycosylase C (359 aa).

A signal peptide spans 1 to 16 (MKKYLALALIAPLLIS). C17 carries N-palmitoyl cysteine lipidation. C17 carries the S-diacylglycerol cysteine lipid modification.

It belongs to the transglycosylase Slt family.

It localises to the cell outer membrane. The catalysed reaction is Exolytic cleavage of the (1-&gt;4)-beta-glycosidic linkage between N-acetylmuramic acid (MurNAc) and N-acetylglucosamine (GlcNAc) residues in peptidoglycan, from either the reducing or the non-reducing ends of the peptidoglycan chains, with concomitant formation of a 1,6-anhydrobond in the MurNAc residue.. Its function is as follows. Murein-degrading enzyme. May play a role in recycling of muropeptides during cell elongation and/or cell division. The polypeptide is Membrane-bound lytic murein transglycosylase C (Shigella dysenteriae serotype 1 (strain Sd197)).